The chain runs to 233 residues: Phytol kinase (233 aa).

6 helical membrane passes run 9–29, 56–76, 96–118, 122–144, 172–192, and 213–233; these read MALP…AVVL, VVLI…AGVF, VGRH…GGFF, LPIF…ALVG, FLVT…VLVV, and NLTV…LWLG.

The protein belongs to the polyprenol kinase family.

Its subcellular location is the cell membrane. It carries out the reaction phytol + CTP = phytyl phosphate + CDP + H(+). It participates in cofactor biosynthesis; tocopherol biosynthesis. Functionally, catalyzes the CTP-dependent phosphorylation of phytol to phytylmonophosphate (PMP). Can also use UTP as an alternative phosphate donor, but not ATP or GTP. Is involved in tocopherol biosynthesis, via the utilization of phytol generated by chlorophyll degradation. Also plays a significant but not critical role in the recycling of phytol for the biosynthesis of new chlorophyll molecules. In Synechocystis sp. (strain ATCC 27184 / PCC 6803 / Kazusa), this protein is Phytol kinase.